Here is a 391-residue protein sequence, read N- to C-terminus: Protein ABCI12, chloroplastic (391 aa).

The transit peptide at 1 to 63 (MNHSNLANPT…LAAKRVFIVR (63 aa)) directs the protein to the chloroplast. The next 5 helical transmembrane spans lie at 134-154 (ANLV…ILVL), 168-188 (LLSG…PPML), 229-249 (VGST…ICLA), 263-283 (FLFP…TLLL), and 370-390 (FASV…EYFL).

The protein localises to the plastid. The protein resides in the chloroplast. It localises to the membrane. This Arabidopsis thaliana (Mouse-ear cress) protein is Protein ABCI12, chloroplastic (ABCI12).